A 70-amino-acid chain; its full sequence is U-actitoxin-Ael2c (70 aa).

The first 21 residues, 1 to 21 (SYQRFLFLVVVASLIATSLAI), serve as a signal peptide directing secretion. Residues 22 to 26 (PKDLE) constitute a propeptide that is removed on maturation. Intrachain disulfides connect Cys32/Cys65, Cys34/Cys58, and Cys48/Cys66.

Belongs to the sea anemone type 3 (BDS) potassium channel toxin family.

Its subcellular location is the secreted. It is found in the nematocyst. Potently and selectively inhibits voltage-gated potassium channels Kv11/KCNH/ERG. Acts as a gating-modifier toxin that shifts the voltage-dependence of ERG activation in the positive direction and suppresses its current amplitudes elicited by strong depolarizing pulses that maximally activate the channels. The protein is U-actitoxin-Ael2c of Anthopleura elegantissima (Green aggregating anemone).